The following is a 566-amino-acid chain: Arginine--tRNA ligase (566 aa).

The 'HIGH' region signature appears at proline 121 to histidine 131.

It belongs to the class-I aminoacyl-tRNA synthetase family. Monomer.

Its subcellular location is the cytoplasm. The catalysed reaction is tRNA(Arg) + L-arginine + ATP = L-arginyl-tRNA(Arg) + AMP + diphosphate. The polypeptide is Arginine--tRNA ligase (Oenococcus oeni (strain ATCC BAA-331 / PSU-1)).